The following is a 353-amino-acid chain: Outer membrane protein P2 (353 aa).

Residues 1–20 (MKKTLAALIVGAFAASAANA) form the signal peptide.

This sequence belongs to the Gram-negative porin family. Homotrimer.

The protein localises to the cell outer membrane. Forms pores that allow passive diffusion of small molecules across the outer membrane. This Haemophilus influenzae protein is Outer membrane protein P2 (ompP2).